A 131-amino-acid chain; its full sequence is Large ribosomal subunit protein eL32 (131 aa).

This sequence belongs to the eukaryotic ribosomal protein eL32 family. Component of the large ribosomal subunit (LSU). Mature N.crassa ribosomes consist of a small (40S) and a large (60S) subunit. The 40S small subunit contains 1 molecule of ribosomal RNA (18S rRNA) and at least 32 different proteins. The large 60S subunit contains 3 rRNA molecules (26S, 5.8S and 5S rRNA) and at least 42 different proteins.

The protein localises to the cytoplasm. Functionally, component of the ribosome, a large ribonucleoprotein complex responsible for the synthesis of proteins in the cell. The small ribosomal subunit (SSU) binds messenger RNAs (mRNAs) and translates the encoded message by selecting cognate aminoacyl-transfer RNA (tRNA) molecules. The large subunit (LSU) contains the ribosomal catalytic site termed the peptidyl transferase center (PTC), which catalyzes the formation of peptide bonds, thereby polymerizing the amino acids delivered by tRNAs into a polypeptide chain. The nascent polypeptides leave the ribosome through a tunnel in the LSU and interact with protein factors that function in enzymatic processing, targeting, and the membrane insertion of nascent chains at the exit of the ribosomal tunnel. The polypeptide is Large ribosomal subunit protein eL32 (crp-63) (Neurospora crassa (strain ATCC 24698 / 74-OR23-1A / CBS 708.71 / DSM 1257 / FGSC 987)).